A 313-amino-acid polypeptide reads, in one-letter code: Olfactory receptor 1G1 (313 aa).

Residues 1-25 (MEGKNLTSISEFFLLGFSEQLEEQK) are Extracellular-facing. Asn5 carries N-linked (GlcNAc...) asparagine glycosylation. The chain crosses the membrane as a helical span at residues 26–49 (ALFGSFLFMYLVMVAGNLLIILVI). Residues 50-57 (ITDTQLHT) lie on the Cytoplasmic side of the membrane. A helical membrane pass occupies residues 58–79 (PMYFFLANLSLADACFVSTTVP). Residues 80-100 (KMLANIQIQSQAISYSGCLLQ) lie on the Extracellular side of the membrane. An intrachain disulfide couples Cys97 to Cys189. A helical membrane pass occupies residues 101–120 (LYFFMLFVMLEAFLLAVMAY). The Cytoplasmic portion of the chain corresponds to 121–140 (DHYVAICHPLHYILIMSPGL). The chain crosses the membrane as a helical span at residues 141–158 (CVFLVSASWIMNALYSLL). Over 159–196 (HTLLMNSLSFCANHEIPHFFCDIDPLLSLSCADPFTNE) the chain is Extracellular. The chain crosses the membrane as a helical span at residues 197–219 (LVIFITGGLTGLICVLCLIISYT). Residues 220-236 (NVFSTILKIPSAQGKRK) are Cytoplasmic-facing. A helical transmembrane segment spans residues 237–259 (AFSTCSSHLSVVSLFXGTSFCVY). The Extracellular portion of the chain corresponds to 260–272 (FSPPSTRXAQKDT). A helical membrane pass occupies residues 273–292 (VASVMYTVVTPMLNPFIYSL). Residues 293–313 (RNQEIKSSLRKLIWVRKIHSP) are Cytoplasmic-facing.

The protein belongs to the G-protein coupled receptor 1 family.

The protein localises to the cell membrane. Functionally, odorant receptor. The protein is Olfactory receptor 1G1 (OR1G1) of Pan troglodytes (Chimpanzee).